Consider the following 207-residue polypeptide: Large ribosomal subunit protein bL25 (207 aa).

This sequence belongs to the bacterial ribosomal protein bL25 family. CTC subfamily. In terms of assembly, part of the 50S ribosomal subunit; part of the 5S rRNA/L5/L18/L25 subcomplex. Contacts the 5S rRNA. Binds to the 5S rRNA independently of L5 and L18.

In terms of biological role, this is one of the proteins that binds to the 5S RNA in the ribosome where it forms part of the central protuberance. In Dictyoglomus thermophilum (strain ATCC 35947 / DSM 3960 / H-6-12), this protein is Large ribosomal subunit protein bL25.